The chain runs to 143 residues: Mediator of RNA polymerase II transcription subunit 10 (143 aa).

The disordered stretch occupies residues glycine 123–serine 143. The span at alanine 124–serine 143 shows a compositional bias: polar residues.

It belongs to the Mediator complex subunit 10 family. Component of the Mediator complex.

The protein localises to the nucleus. Component of the Mediator complex, a coactivator involved in the regulated transcription of nearly all RNA polymerase II-dependent genes. Mediator functions as a bridge to convey information from gene-specific regulatory proteins to the basal RNA polymerase II transcription machinery. Mediator is recruited to promoters by direct interactions with regulatory proteins and serves as a scaffold for the assembly of a functional preinitiation complex with RNA polymerase II and the general transcription factors. The polypeptide is Mediator of RNA polymerase II transcription subunit 10 (NUT2) (Yarrowia lipolytica (strain CLIB 122 / E 150) (Yeast)).